The chain runs to 125 residues: MARLAGVDIPNEKRIEIALTYIFGVGRTRAKETLAATGISPDIRVKDLTDEQLITLRDYLEANYKIEGDLRREIDADIRRKIQINCYQGQRHRKGLPVRGQRTKTNARTRKGPKRTVAGKKKATK.

The interval 90 to 125 is disordered; sequence QRHRKGLPVRGQRTKTNARTRKGPKRTVAGKKKATK.

The protein belongs to the universal ribosomal protein uS13 family. In terms of assembly, part of the 30S ribosomal subunit. Forms a loose heterodimer with protein S19. Forms two bridges to the 50S subunit in the 70S ribosome.

Located at the top of the head of the 30S subunit, it contacts several helices of the 16S rRNA. In the 70S ribosome it contacts the 23S rRNA (bridge B1a) and protein L5 of the 50S subunit (bridge B1b), connecting the 2 subunits; these bridges are implicated in subunit movement. Contacts the tRNAs in the A and P-sites. The chain is Small ribosomal subunit protein uS13 from Bifidobacterium longum subsp. infantis (strain ATCC 15697 / DSM 20088 / JCM 1222 / NCTC 11817 / S12).